The primary structure comprises 414 residues: tRNA N6-adenosine threonylcarbamoyltransferase, mitochondrial (414 aa).

A mitochondrion-targeting transit peptide spans 1-29 (MLMLSKTAGAIPRPPRSNVRGFIRRFNVQ). N6-acetyllysine occurs at positions 74 and 140. His147 and His151 together coordinate a divalent metal cation. Substrate contacts are provided by residues 169–173 (LISGG) and Asp202. Lys203 carries the N6-acetyllysine modification. Residues Gly222 and Glu226 each coordinate substrate. N6-acetyllysine occurs at positions 230 and 299. Substrate contacts are provided by residues 329–330 (SN) and Thr357. Residue Asp358 participates in a divalent metal cation binding.

It belongs to the KAE1 / TsaD family. Monomer. It depends on a divalent metal cation as a cofactor.

Its subcellular location is the mitochondrion. The enzyme catalyses L-threonylcarbamoyladenylate + adenosine(37) in tRNA = N(6)-L-threonylcarbamoyladenosine(37) in tRNA + AMP + H(+). Required for the formation of a threonylcarbamoyl group on adenosine at position 37 (t(6)A37) in mitochondrial tRNAs that read codons beginning with adenine. Probably involved in the transfer of the threonylcarbamoyl moiety of threonylcarbamoyl-AMP (TC-AMP) to the N6 group of A37. Involved in mitochondrial genome maintenance. The chain is tRNA N6-adenosine threonylcarbamoyltransferase, mitochondrial from Rattus norvegicus (Rat).